A 276-amino-acid polypeptide reads, in one-letter code: MESHLQKRKDSRKPLRIKVISMGNAEVGKSCIIKRYCEKRFVPKYQATIGIDYGVTKVQIKDREIKVNIFDMAGHPFFYEVRNEFYKDTQGVILVYDVGQKESFESLDAWLAEMKQELGPQINIDNLDNIVFAVCANKIDSTKHRCVDESEGRLWSESKGFLYFETSAQSGEGINEMFQAFYSSIVDLCDNGGKRPVSAINIGFTKEQADSIRRIRNSKDSWDMLGVKPGATRDEVNKAYRKLAVLLHPDKCVAPGSEDAFKAVVNARTALLKNIK.

Residues Gly23–Ser30, Asp71–His75, and Asn137–Asp140 each bind GTP. One can recognise a J domain in the interval Asp220–Lys276.

Belongs to the small GTPase superfamily. Rab family.

The protein resides in the nucleus. GTPase possibly involved in regulation of the MEK/ERK pathway. The polypeptide is DnaJ homolog subfamily C member 27-B (dnajc27-b) (Xenopus laevis (African clawed frog)).